The primary structure comprises 192 residues: Potassium-transporting ATPase KdpC subunit (192 aa).

Residues 14 to 34 traverse the membrane as a helical segment; that stretch reads LTGVLVVLCGLIYPAMVTGIA.

The protein belongs to the KdpC family. In terms of assembly, the system is composed of three essential subunits: KdpA, KdpB and KdpC.

It localises to the cell membrane. Its function is as follows. Part of the high-affinity ATP-driven potassium transport (or Kdp) system, which catalyzes the hydrolysis of ATP coupled with the electrogenic transport of potassium into the cytoplasm. This subunit acts as a catalytic chaperone that increases the ATP-binding affinity of the ATP-hydrolyzing subunit KdpB by the formation of a transient KdpB/KdpC/ATP ternary complex. This chain is Potassium-transporting ATPase KdpC subunit, found in Bacillus cytotoxicus (strain DSM 22905 / CIP 110041 / 391-98 / NVH 391-98).